A 111-amino-acid polypeptide reads, in one-letter code: uncharacterized protein (111 aa).

Helical transmembrane passes span 22–42 (ASLI…ANIT), 48–68 (LTPA…VSVL), and 75–95 (VLVT…PKIL).

Its subcellular location is the membrane. This is an uncharacterized protein from Saccharomyces cerevisiae (strain ATCC 204508 / S288c) (Baker's yeast).